The following is a 573-amino-acid chain: Solute carrier family 41 member 2 (573 aa).

Residues 1–162 (MTNSKGRSIT…KESSGIMALQ (162 aa)) lie on the Extracellular side of the membrane. A phosphoserine mark is found at Ser136 and Ser137. A helical transmembrane segment spans residues 163 to 183 (ILVPFLLAGFGTVSAGMVLDI). At 184 to 195 (VQHWEVFRKVTE) the chain is on the cytoplasmic side. The chain crosses the membrane as a helical span at residues 196-216 (VFILVPALLGLKGNLEMTLAS). The Extracellular portion of the chain corresponds to 217-245 (RLSTAVNIGKMDSPIEKWNLIIGNLALKQ). Residues 246-266 (VQATVVGFLAAVAAIILGWIP) traverse the membrane as a helical segment. Over 267–282 (EGKYYLDHSILLCSSS) the chain is Cytoplasmic. The helical transmembrane segment at 283-303 (VATAFIASLLQGIIMVGVIVG) threads the bilayer. Over 304–313 (SKKTGINPDN) the chain is Extracellular. Residues 314 to 334 (VATPIAASFGDLITLAILAWI) traverse the membrane as a helical segment. Residues 335–347 (SQGLYSCLETYYY) lie on the Cytoplasmic side of the membrane. The helical transmembrane segment at 348–368 (ISPLVGVFFLALTPIWIIIAA) threads the bilayer. At 369–376 (KHPATRTV) the chain is on the extracellular side. The chain crosses the membrane as a helical span at residues 377–397 (LHSGWEPVITAMVISSIGGLI). Residues 398 to 406 (LDTTVSDPN) are Cytoplasmic-facing. The helical transmembrane segment at 407–427 (LVGIVVYTPVINGIGGNLVAI) threads the bilayer. Over 428–469 (QASRISTYLHLHSIPGELPDEPKGCYYPFRTFFGPGVNNKSA) the chain is Extracellular. Residues 470–490 (QVLLLLVIPGHLIFLYTIHLM) traverse the membrane as a helical segment. Residues 491–498 (KSGHTSLT) are Cytoplasmic-facing. A helical transmembrane segment spans residues 499–519 (IIFIVVYLFGAVLQVFTLLWI). The Extracellular portion of the chain corresponds to 520-543 (ADWMVHHFWRKGKDPDSFSIPYLT). A helical membrane pass occupies residues 544 to 564 (ALGDLLGTALLALSFHFLWLI). Over 565–573 (GDRDGDVGD) the chain is Cytoplasmic.

Belongs to the SLC41A transporter family.

It localises to the cell membrane. It carries out the reaction Mg(2+)(in) = Mg(2+)(out). The catalysed reaction is Mn(2+)(in) = Mn(2+)(out). The enzyme catalyses Co(2+)(in) = Co(2+)(out). It catalyses the reaction Ni(2+)(in) = Ni(2+)(out). It carries out the reaction Fe(2+)(in) = Fe(2+)(out). In terms of biological role, acts as a plasma-membrane magnesium transporter. Can also mediate the transport of other divalent metal cations in an order of Ba(2+) &gt; Ni(2+) &gt; Co(2+) &gt; Fe(2+) &gt; Mn(2+). In Homo sapiens (Human), this protein is Solute carrier family 41 member 2 (SLC41A2).